Here is a 185-residue protein sequence, read N- to C-terminus: Thymidine kinase (185 aa).

Residues 7-14 (GPMFAGKT) and 83-86 (DEIQ) contribute to the ATP site. The active-site Proton acceptor is Glu-84. Zn(2+) is bound by residues Cys-139, Cys-142, Cys-177, and His-180.

It belongs to the thymidine kinase family. Homotetramer.

Its subcellular location is the cytoplasm. It catalyses the reaction thymidine + ATP = dTMP + ADP + H(+). The sequence is that of Thymidine kinase from Pyrobaculum aerophilum (strain ATCC 51768 / DSM 7523 / JCM 9630 / CIP 104966 / NBRC 100827 / IM2).